Here is a 562-residue protein sequence, read N- to C-terminus: MAASAKRKQEEKHLKMLRDMTGLPHNRKCFDCDQRGPTYVNMTVGSFVCTSCSGSLRGLNPPHRVKSISMTTFTQQEIEFLQKHGNEVCKQIWLGLFDDRSSAIPDFRDPQKVKEFLQEKYEKKRWYVPPEQAKVVASVHASISGSSASSTSSTPEVKPLKSLLGDSAPALHLNKGTPSQSPVVGRSQAQQQEKKQFDLLSDLGSDIFAAPAPQSTATANFANFAHFNSHAAQNSANADFANFDAFGQSSGSSNFGGFPTASHSSFQPQTTGGSAGSVNANFAHFDNFPKSSSADFGTFNTSQSHQTASAVSKVSANKAGLQTTDKYAALANLDNIFSAGQGGDQGSGFGTTGKAPVGSVVSVPSQSSASSDKYAALAELDSVFSSAATSSNAYTSTSNASSNVFGTVPVGASAQTQPASSSVPAPFGATPSTNPFVAAAGPSVASSTNPFQTNARGATAATFGTASMSMPAGFGTPAPYSLPTSFSGSFQQPAFPAQAAFPQQTAFSQQPNGAGFAAFGQTKPVVTPFGQVGAAGVSSNPFMTGAPTGQFPTGSSSTNPFL.

The 125-residue stretch at 11 to 135 (EKHLKMLRDM…WYVPPEQAKV (125 aa)) folds into the Arf-GAP domain. Residues 29–52 (CFDCDQRGPTYVNMTVGSFVCTSC) form a C4-type zinc finger. At Ser167 the chain carries Phosphoserine. Positions 168 to 194 (APALHLNKGTPSQSPVVGRSQAQQQEK) are disordered. Over residues 176 to 191 (GTPSQSPVVGRSQAQQ) the composition is skewed to polar residues. Thr177 carries the phosphothreonine modification. Phosphoserine occurs at positions 181 and 362. O-linked (GlcNAc) serine glycosylation is present at Ser367.

Interacts with EPS15R and EPS15. Interacts with FCHO1. In terms of processing, O-glycosylated.

The protein localises to the nucleus. Its subcellular location is the cytoplasmic vesicle. In terms of biological role, required for vesicle docking or fusion during acrosome biogenesis. May play a role in RNA trafficking or localization. In Bos taurus (Bovine), this protein is Arf-GAP domain and FG repeat-containing protein 1 (AGFG1).